We begin with the raw amino-acid sequence, 350 residues long: Hydroxymethylglutaryl-CoA synthase (350 aa).

The (3S)-3-hydroxy-3-methylglutaryl-CoA site is built by aspartate 33 and valine 34. Residue glutamate 85 is the Proton donor/acceptor of the active site. Cysteine 117 and threonine 158 together coordinate (3S)-3-hydroxy-3-methylglutaryl-CoA. The active-site Acyl-thioester intermediate is the cysteine 117. Arginine 204 serves as a coordination point for CoA. Positions 206 and 239 each coordinate (3S)-3-hydroxy-3-methylglutaryl-CoA. Catalysis depends on histidine 239, which acts as the Proton donor/acceptor. Lysine 244 serves as a coordination point for CoA. Residues lysine 248, asparagine 271, and serine 301 each contribute to the (3S)-3-hydroxy-3-methylglutaryl-CoA site.

Belongs to the thiolase-like superfamily. Archaeal HMG-CoA synthase family. As to quaternary structure, interacts with acetoacetyl-CoA thiolase that catalyzes the precedent step in the pathway and with a DUF35 protein. The acetoacetyl-CoA thiolase/HMG-CoA synthase complex channels the intermediate via a fused CoA-binding site, which allows for efficient coupling of the endergonic thiolase reaction with the exergonic HMGCS reaction.

The enzyme catalyses acetoacetyl-CoA + acetyl-CoA + H2O = (3S)-3-hydroxy-3-methylglutaryl-CoA + CoA + H(+). It participates in metabolic intermediate biosynthesis; (R)-mevalonate biosynthesis; (R)-mevalonate from acetyl-CoA: step 2/3. Catalyzes the condensation of acetyl-CoA with acetoacetyl-CoA to form 3-hydroxy-3-methylglutaryl-CoA (HMG-CoA). Functions in the mevalonate (MVA) pathway leading to isopentenyl diphosphate (IPP), a key precursor for the biosynthesis of isoprenoid compounds that are building blocks of archaeal membrane lipids. This Methanopyrus kandleri (strain AV19 / DSM 6324 / JCM 9639 / NBRC 100938) protein is Hydroxymethylglutaryl-CoA synthase.